A 683-amino-acid chain; its full sequence is Acyl-CoA synthetase short-chain family member 3, mitochondrial (683 aa).

The N-terminal 29 residues, 1 to 29 (MKPSWLQCRKVTGAGTLGAPLPGSPSVRG), are a transit peptide targeting the mitochondrion. 223–226 (EPGR) contacts CoA. ATP contacts are provided by residues 421–423 (GER) and 442–447 (DHWWQT). Residue Lys-514 is modified to N6-succinyllysine. Lys-520 carries the post-translational modification N6-acetyllysine. Residues Asp-535, Arg-550, and Arg-561 each coordinate ATP. CoA is bound at residue Arg-620.

This sequence belongs to the ATP-dependent AMP-binding enzyme family. As to expression, expressed in a wide range of tissues, with the highest levels observed in the liver followed by kidney.

It is found in the mitochondrion matrix. The catalysed reaction is acetate + ATP + CoA = acetyl-CoA + AMP + diphosphate. It catalyses the reaction propanoate + ATP + CoA = propanoyl-CoA + AMP + diphosphate. It carries out the reaction butanoate + ATP + CoA = butanoyl-CoA + AMP + diphosphate. Its function is as follows. Catalyzes the synthesis of acetyl-CoA from short-chain fatty acids. Propionate is the preferred substrate but can also utilize acetate and butyrate with a much lower affinity. This chain is Acyl-CoA synthetase short-chain family member 3, mitochondrial (Acss3), found in Rattus norvegicus (Rat).